We begin with the raw amino-acid sequence, 468 residues long: Probable soluble pyridine nucleotide transhydrogenase (468 aa).

Position 33 to 42 (33 to 42 (ERGRMLGGVC)) interacts with FAD.

Belongs to the class-I pyridine nucleotide-disulfide oxidoreductase family. The cofactor is FAD.

The protein localises to the cytoplasm. It catalyses the reaction NAD(+) + NADPH = NADH + NADP(+). Conversion of NADPH, generated by peripheral catabolic pathways, to NADH, which can enter the respiratory chain for energy generation. This chain is Probable soluble pyridine nucleotide transhydrogenase (sthA), found in Mycobacterium bovis (strain ATCC BAA-935 / AF2122/97).